The following is a 461-amino-acid chain: Photosystem II CP43 reaction center protein (461 aa).

Residues 1-2 constitute a propeptide that is removed on maturation; that stretch reads ME. The residue at position 3 (threonine 3) is an N-acetylthreonine. Threonine 3 is modified (phosphothreonine). The next 5 membrane-spanning stretches (helical) occupy residues 57–81, 122–143, 166–188, 243–263, and 279–300; these read LFEV…PHLA, LLGP…KDRN, KALY…RKIT, KPFA…LSYS, and WFNN…ASQA. Glutamate 355 contributes to the [CaMn4O5] cluster binding site. A helical membrane pass occupies residues 435 to 459; sequence RARAAAAGFEKGIDRDFEPVLSMTP.

Belongs to the PsbB/PsbC family. PsbC subfamily. In terms of assembly, PSII is composed of 1 copy each of membrane proteins PsbA, PsbB, PsbC, PsbD, PsbE, PsbF, PsbH, PsbI, PsbJ, PsbK, PsbL, PsbM, PsbT, PsbX, PsbY, PsbZ, Psb30/Ycf12, at least 3 peripheral proteins of the oxygen-evolving complex and a large number of cofactors. It forms dimeric complexes. Requires Binds multiple chlorophylls and provides some of the ligands for the Ca-4Mn-5O cluster of the oxygen-evolving complex. It may also provide a ligand for a Cl- that is required for oxygen evolution. PSII binds additional chlorophylls, carotenoids and specific lipids. as cofactor.

The protein localises to the plastid. It localises to the chloroplast thylakoid membrane. In terms of biological role, one of the components of the core complex of photosystem II (PSII). It binds chlorophyll and helps catalyze the primary light-induced photochemical processes of PSII. PSII is a light-driven water:plastoquinone oxidoreductase, using light energy to abstract electrons from H(2)O, generating O(2) and a proton gradient subsequently used for ATP formation. The polypeptide is Photosystem II CP43 reaction center protein (Platanus occidentalis (Sycamore)).